We begin with the raw amino-acid sequence, 336 residues long: Cytoskeleton protein RodZ (336 aa).

Topologically, residues 1-111 (MNTEATHDQN…LGKRRKKRDG (111 aa)) are cytoplasmic. Positions 19–71 (LRNAREQLGLSQQAVAERLCLKVSTVRDIEEDKAPADLASTFLRGYIRSYARL) constitute an HTH cro/C1-type domain. Positions 30–49 (QQAVAERLCLKVSTVRDIEE) form a DNA-binding region, H-T-H motif. Residues 112–132 (WLMTFTWLVLFVVIGLSGAWW) traverse the membrane as a helical; Signal-anchor for type II membrane protein segment. Over 133 to 336 (WQDHKAQQEE…TLNAEQSPAQ (204 aa)) the chain is Periplasmic. Polar residues predominate over residues 148 to 164 (DQSSAELNNNQSQSVPL). The segment at 148 to 245 (DQSSAELNNN…PLPTDQAGVT (98 aa)) is disordered. A compositionally biased stretch (low complexity) spans 165–201 (DTSTTTDQAMATTPTSPVDTTATNTQTPAATTAPSPT). The span at 202-217 (VDSQQNAVVPPSQANV) shows a compositional bias: polar residues. The segment covering 218–240 (DTAATPAPAATTTPDGAAPLPTD) has biased composition (low complexity).

The protein belongs to the RodZ family.

The protein resides in the cell inner membrane. Functionally, cytoskeletal protein that is involved in cell-shape control through regulation of the length of the long axis. This Escherichia coli O7:K1 (strain IAI39 / ExPEC) protein is Cytoskeleton protein RodZ.